Here is a 428-residue protein sequence, read N- to C-terminus: Serine--tRNA ligase (428 aa).

Thr-235–Glu-237 is a binding site for L-serine. ATP is bound at residue Arg-266–Glu-268. Position 289 (Glu-289) interacts with L-serine. Glu-353–Ser-356 lines the ATP pocket. Ser-389 is a binding site for L-serine.

The protein belongs to the class-II aminoacyl-tRNA synthetase family. Type-1 seryl-tRNA synthetase subfamily. Homodimer. The tRNA molecule binds across the dimer.

It is found in the cytoplasm. It carries out the reaction tRNA(Ser) + L-serine + ATP = L-seryl-tRNA(Ser) + AMP + diphosphate + H(+). The enzyme catalyses tRNA(Sec) + L-serine + ATP = L-seryl-tRNA(Sec) + AMP + diphosphate + H(+). Its pathway is aminoacyl-tRNA biosynthesis; selenocysteinyl-tRNA(Sec) biosynthesis; L-seryl-tRNA(Sec) from L-serine and tRNA(Sec): step 1/1. Its function is as follows. Catalyzes the attachment of serine to tRNA(Ser). Is also able to aminoacylate tRNA(Sec) with serine, to form the misacylated tRNA L-seryl-tRNA(Sec), which will be further converted into selenocysteinyl-tRNA(Sec). This chain is Serine--tRNA ligase, found in Shewanella amazonensis (strain ATCC BAA-1098 / SB2B).